Here is a 483-residue protein sequence, read N- to C-terminus: Scarecrow-like protein 26 (483 aa).

The region spanning 95 to 477 is the GRAS domain; it reads KTDESKGLRL…RRLVSASFWA (383 aa). A leucine repeat I (LRI) region spans residues 102 to 165; that stretch reads LRLVHLLVAA…SKLLERDSVL (64 aa). Residues 184–251 form a VHIID region; the sequence is FELLQNMSPY…PSAQHLRITA (68 aa). Positions 215–219 match the VHIID motif; that stretch reads IHIVD. The tract at residues 267-299 is leucine repeat II (LRII); that stretch reads ETGRRLTAFADSIGQPFSYQHCKLDTNAFSTSS. The interval 308-400 is PFYRE; that stretch reads VVINCMLHLP…RVFIGPWVAN (93 aa). An SAW region spans residues 403–477; the sequence is TRITANDAEV…RRLVSASFWA (75 aa).

This sequence belongs to the GRAS family. As to expression, expressed in seedlings, roots, leaves and flowers.

It localises to the nucleus. Functionally, probable transcription factor involved in plant development. This Arabidopsis thaliana (Mouse-ear cress) protein is Scarecrow-like protein 26 (SCL26).